The following is a 332-amino-acid chain: Ribosomal RNA small subunit methyltransferase C (332 aa).

This sequence belongs to the methyltransferase superfamily. RsmC family. In terms of assembly, monomer.

Its subcellular location is the cytoplasm. It carries out the reaction guanosine(1207) in 16S rRNA + S-adenosyl-L-methionine = N(2)-methylguanosine(1207) in 16S rRNA + S-adenosyl-L-homocysteine + H(+). In terms of biological role, specifically methylates the guanine in position 1207 of 16S rRNA in the 30S particle. This Pseudomonas aeruginosa (strain LESB58) protein is Ribosomal RNA small subunit methyltransferase C.